Reading from the N-terminus, the 396-residue chain is L-tyrosine/L-aspartate decarboxylase (396 aa).

The residue at position 245 (Lys245) is an N6-(pyridoxal phosphate)lysine.

This sequence belongs to the group II decarboxylase family. MfnA subfamily. In terms of assembly, homodimer. The cofactor is pyridoxal 5'-phosphate.

It carries out the reaction L-tyrosine + H(+) = tyramine + CO2. It catalyses the reaction L-aspartate + H(+) = beta-alanine + CO2. It participates in cofactor biosynthesis; methanofuran biosynthesis. The protein operates within cofactor biosynthesis; coenzyme A biosynthesis. Inhibited by hydroxylamine and O-methylhydroxylamine. Catalyzes the decarboxylation of L-tyrosine to produce tyramine for methanofuran biosynthesis. Can also catalyze the decarboxylation of L-aspartate to produce beta-alanine for coenzyme A (CoA) biosynthesis. This chain is L-tyrosine/L-aspartate decarboxylase, found in Methanocaldococcus jannaschii (strain ATCC 43067 / DSM 2661 / JAL-1 / JCM 10045 / NBRC 100440) (Methanococcus jannaschii).